Reading from the N-terminus, the 374-residue chain is UDP-N-acetylglucosamine--N-acetylmuramyl-(pentapeptide) pyrophosphoryl-undecaprenol N-acetylglucosamine transferase (374 aa).

UDP-N-acetyl-alpha-D-glucosamine is bound by residues Thr13–Gly15, Asn124, Arg165, Ser193, and Gln294.

The protein belongs to the glycosyltransferase 28 family. MurG subfamily.

Its subcellular location is the cell inner membrane. The enzyme catalyses di-trans,octa-cis-undecaprenyl diphospho-N-acetyl-alpha-D-muramoyl-L-alanyl-D-glutamyl-meso-2,6-diaminopimeloyl-D-alanyl-D-alanine + UDP-N-acetyl-alpha-D-glucosamine = di-trans,octa-cis-undecaprenyl diphospho-[N-acetyl-alpha-D-glucosaminyl-(1-&gt;4)]-N-acetyl-alpha-D-muramoyl-L-alanyl-D-glutamyl-meso-2,6-diaminopimeloyl-D-alanyl-D-alanine + UDP + H(+). Its pathway is cell wall biogenesis; peptidoglycan biosynthesis. Cell wall formation. Catalyzes the transfer of a GlcNAc subunit on undecaprenyl-pyrophosphoryl-MurNAc-pentapeptide (lipid intermediate I) to form undecaprenyl-pyrophosphoryl-MurNAc-(pentapeptide)GlcNAc (lipid intermediate II). The sequence is that of UDP-N-acetylglucosamine--N-acetylmuramyl-(pentapeptide) pyrophosphoryl-undecaprenol N-acetylglucosamine transferase from Sinorhizobium medicae (strain WSM419) (Ensifer medicae).